Reading from the N-terminus, the 520-residue chain is GMP synthase [glutamine-hydrolyzing] (520 aa).

The 195-residue stretch at 8-202 (RLLIIDFGSQ…FVRLAGFTGD (195 aa)) folds into the Glutamine amidotransferase type-1 domain. The Nucleophile role is filled by Cys-86. Catalysis depends on residues His-177 and Glu-179. The GMPS ATP-PPase domain occupies 203–395 (WTMDAYREQA…LGLPASFIGR (193 aa)). 230–236 (SGGVDSS) contacts ATP.

Homodimer.

The enzyme catalyses XMP + L-glutamine + ATP + H2O = GMP + L-glutamate + AMP + diphosphate + 2 H(+). It participates in purine metabolism; GMP biosynthesis; GMP from XMP (L-Gln route): step 1/1. In terms of biological role, catalyzes the synthesis of GMP from XMP. This is GMP synthase [glutamine-hydrolyzing] from Dinoroseobacter shibae (strain DSM 16493 / NCIMB 14021 / DFL 12).